The primary structure comprises 313 residues: Olfactory receptor 10G3 (313 aa).

Topologically, residues 1–25 (MERINSTLLTAFILTGIPYPLRLRT) are extracellular. Asn-5 carries an N-linked (GlcNAc...) asparagine glycan. Residues 26–46 (LFFVFFFLIYILTQLGNLLIL) traverse the membrane as a helical segment. Residues 47-54 (ITVWADPR) are Cytoplasmic-facing. The helical transmembrane segment at 55–76 (LHARPMYIFLGVLSVIDMSISS) threads the bilayer. Residues 77–100 (IIVPRLMMNFTLGVKPIPFGGCVA) lie on the Extracellular side of the membrane. The N-linked (GlcNAc...) asparagine glycan is linked to Asn-85. Cys-98 and Cys-190 are joined by a disulfide. A helical transmembrane segment spans residues 101 to 121 (QLYFYHFLGSTQCFLYTLMAY). Residues 122–140 (DRYLAICQPLRYPVLMTAK) are Cytoplasmic-facing. The helical transmembrane segment at 141–161 (LSALLVAGAWMAGSIHGALQA) threads the bilayer. The Extracellular portion of the chain corresponds to 162-198 (ILTFRLPYCGPNQVDYFFCDIPAVLRLACADTTVNEL). Residues 199–218 (VTFVDIGVVVASCFSLILLS) traverse the membrane as a helical segment. Topologically, residues 219–238 (YIQIIQAILRIHTADGRRRA) are cytoplasmic. Residues 239–259 (FSTCGAHVTVVTVYYVPCAFI) form a helical membrane-spanning segment. Over 260-270 (YLRPETNSPLD) the chain is Extracellular. Residues 271–291 (GAAALVPTAITPFLNPLIYTL) form a helical membrane-spanning segment. At 292–313 (RNQEVKLALKRMLRSPRTPSEV) the chain is on the cytoplasmic side.

This sequence belongs to the G-protein coupled receptor 1 family.

Its subcellular location is the cell membrane. Odorant receptor. The protein is Olfactory receptor 10G3 (OR10G3) of Homo sapiens (Human).